The chain runs to 71 residues: Disintegrin horridistatin-2 (71 aa).

The Disintegrin domain maps to 1-71; it reads GEECDCGSPA…ADCPRNGLYG (71 aa). 6 disulfide bridges follow: cysteine 4/cysteine 19, cysteine 6/cysteine 14, cysteine 13/cysteine 36, cysteine 27/cysteine 33, cysteine 32/cysteine 57, and cysteine 45/cysteine 64. The Cell attachment site motif lies at 49 to 51; it reads RGD.

The protein belongs to the venom metalloproteinase (M12B) family. P-II subfamily. P-IIa sub-subfamily. As to quaternary structure, monomer (disintegrin). As to expression, expressed by the venom gland.

The protein localises to the secreted. In terms of biological role, inhibits ADP-induced platelet aggregation (IC(50) is 16.2 nM) by binding to alpha-IIb/beta-3 (ITGA2B/ITGB3). This Crotalus horridus (Timber rattlesnake) protein is Disintegrin horridistatin-2.